The following is a 150-amino-acid chain: FAD synthase (150 aa).

ATP is bound by residues 11 to 12 (TF), 16 to 19 (HPGH), D96, and Y124.

It belongs to the archaeal FAD synthase family. As to quaternary structure, homodimer. A divalent metal cation serves as cofactor.

The enzyme catalyses FMN + ATP + H(+) = FAD + diphosphate. It participates in cofactor biosynthesis; FAD biosynthesis; FAD from FMN: step 1/1. Its function is as follows. Catalyzes the transfer of the AMP portion of ATP to flavin mononucleotide (FMN) to produce flavin adenine dinucleotide (FAD) coenzyme. This Methanocaldococcus fervens (strain DSM 4213 / JCM 15782 / AG86) (Methanococcus fervens) protein is FAD synthase.